A 331-amino-acid polypeptide reads, in one-letter code: D-alanine--D-alanine ligase (331 aa).

Residues 116–316 (KRQWQTHGLP…YEDFVLQLAA (201 aa)) enclose the ATP-grasp domain. An ATP-binding site is contributed by 142–197 (ADRLGLPLIVKPAREGSSIGLTKVTSVAELPAAYEKAARLDRDVMAEQFIEGDELT). 3 residues coordinate Mg(2+): Asp269, Glu283, and Asn285.

It belongs to the D-alanine--D-alanine ligase family. The cofactor is Mg(2+). Mn(2+) is required as a cofactor.

The protein localises to the cytoplasm. The catalysed reaction is 2 D-alanine + ATP = D-alanyl-D-alanine + ADP + phosphate + H(+). The protein operates within cell wall biogenesis; peptidoglycan biosynthesis. Functionally, cell wall formation. This is D-alanine--D-alanine ligase from Ralstonia pickettii (strain 12J).